We begin with the raw amino-acid sequence, 338 residues long: METKLFSPWTLKGVTLKNRIVMSPMCMYSSYDRDGKLQPFHFTHYISRAQGQAGLIMVEASAVSPEGRISDQDLGIWSDEHIEGFASLNEQIKAYGTKTAIQLAHAGRKAELDGDILAPSSIPFDEQSKTPVQMSVDQIKDTVQAFQDAAVRAKKAGFDIIEIHGAHGYLINEFLSPLANHRTDDYGGSPENRYRFLREVVNAVNEVWDGPLFVRVSASDYTTKGLDIADYIGIATWLKEQGVDLIDVSSGAVVQARISTFPGYQVTFAEKIKEGAGIQTGAVGLITSGVQAEEILRNQRADLIFIGREFLRDPYFPKTAAEELRTSIEGPRQYDRAW.

Position 23 to 26 (23 to 26 (SPMC)) interacts with FMN. Tyr28 serves as a coordination point for substrate. Residues Ala60 and Gln102 each coordinate FMN. 164–167 (HGAH) is a binding site for substrate. FMN-binding positions include Arg215 and 307–308 (GR).

The protein belongs to the NADH:flavin oxidoreductase/NADH oxidase family. NamA subfamily. As to quaternary structure, homotetramer. The cofactor is FMN.

It catalyses the reaction A + NADPH + H(+) = AH2 + NADP(+). Its function is as follows. Catalyzes the reduction of the double bond of an array of alpha,beta-unsaturated aldehydes and ketones. It also reduces the nitro group of nitroester and nitroaromatic compounds. It could have a role in detoxification processes. In Bacillus pumilus (strain SAFR-032), this protein is NADPH dehydrogenase.